The following is a 194-amino-acid chain: Imidazoleglycerol-phosphate dehydratase (194 aa).

This sequence belongs to the imidazoleglycerol-phosphate dehydratase family.

It is found in the cytoplasm. It catalyses the reaction D-erythro-1-(imidazol-4-yl)glycerol 3-phosphate = 3-(imidazol-4-yl)-2-oxopropyl phosphate + H2O. It participates in amino-acid biosynthesis; L-histidine biosynthesis; L-histidine from 5-phospho-alpha-D-ribose 1-diphosphate: step 6/9. The polypeptide is Imidazoleglycerol-phosphate dehydratase (Thermoanaerobacter pseudethanolicus (strain ATCC 33223 / 39E) (Clostridium thermohydrosulfuricum)).